Consider the following 129-residue polypeptide: Protein UL131A (129 aa).

A signal peptide spans 1-18; that stretch reads MRLCRVWLSVCLCAVVLG.

In terms of assembly, forms the envelope pentamer complex (PC) composed of gH, gL, UL128, UL130, and UL131A. The pentamer interacts with host NRP2. The interaction with gH is important for the formation of UL128, UL130, gH-gL complex.

It is found in the virion membrane. Plays a role in viral entry into host cells. Forms a pentameric complex at the surface of the viral envelope together with gH, gL, UL130 and UL131. This complex is required for entry in epithelial, endothelial and myeloid host cells. Mechanistically, engages host receptor(s) including neurophilin 2/NRP2 to mediate infection. Contributes to the formation of the complex between UL128, UL130 and gH-gL. The polypeptide is Protein UL131A (UL131A) (Human cytomegalovirus (strain Merlin) (HHV-5)).